Reading from the N-terminus, the 157-residue chain is Large ribosomal subunit protein eL21 (157 aa).

Residues 110–132 (QANDQAKAEGNKAGKRVSTKRNP) are disordered.

It belongs to the eukaryotic ribosomal protein eL21 family.

This chain is Large ribosomal subunit protein eL21 (RPL21), found in Tetrahymena thermophila (strain SB210).